Reading from the N-terminus, the 732-residue chain is Elongation factor 2 (732 aa).

One can recognise a tr-type G domain in the interval 19-260; sequence ERIRNMGIAA…MVVRHLPNPL (242 aa). Residues 28-35, 94-98, and 148-151 contribute to the GTP site; these read AHIDHGKT, DTPGH, and NKVD. His597 carries the post-translational modification Diphthamide.

Belongs to the TRAFAC class translation factor GTPase superfamily. Classic translation factor GTPase family. EF-G/EF-2 subfamily.

Its subcellular location is the cytoplasm. In terms of biological role, catalyzes the GTP-dependent ribosomal translocation step during translation elongation. During this step, the ribosome changes from the pre-translocational (PRE) to the post-translocational (POST) state as the newly formed A-site-bound peptidyl-tRNA and P-site-bound deacylated tRNA move to the P and E sites, respectively. Catalyzes the coordinated movement of the two tRNA molecules, the mRNA and conformational changes in the ribosome. The chain is Elongation factor 2 from Thermococcus onnurineus (strain NA1).